Reading from the N-terminus, the 334-residue chain is Methionine adenosyltransferase 2 subunit beta (334 aa).

Residues 37–40 (TGLL), 60–62 (YSR), 71–72 (NL), Cys93, Arg97, Tyr159, and Leu185 contribute to the NADP(+) site. Residues 319 to 334 (LWPFLVDKRWRQTVFH) form a required for interaction with MAT2A region.

It belongs to the dTDP-4-dehydrorhamnose reductase family. MAT2B subfamily. As to quaternary structure, heterotrimer; composed of a catalytic mat2a homodimer that binds one regulatory mat2b chain. Heterohexamer; composed of a central, catalytic mat2a homotetramer flanked on either side by a regulatory mat2b chain. NADP binding increases the affinity for mat2a.

It participates in amino-acid biosynthesis; S-adenosyl-L-methionine biosynthesis; S-adenosyl-L-methionine from L-methionine: step 1/1. Regulatory subunit of S-adenosylmethionine synthetase 2, an enzyme that catalyzes the formation of S-adenosylmethionine from methionine and ATP. Regulates MAT2A catalytic activity by changing its kinetic properties, increasing its affinity for L-methionine. Can bind NADP (in vitro). The protein is Methionine adenosyltransferase 2 subunit beta (mat2b) of Xenopus tropicalis (Western clawed frog).